The primary structure comprises 51 residues: Insulin (51 aa).

3 disulfide bridges follow: cysteine 7–cysteine 37, cysteine 19–cysteine 50, and cysteine 36–cysteine 41.

The protein belongs to the insulin family. As to quaternary structure, heterodimer of a B chain and an A chain linked by two disulfide bonds.

It is found in the secreted. Insulin decreases blood glucose concentration. It increases cell permeability to monosaccharides, amino acids and fatty acids. It accelerates glycolysis, the pentose phosphate cycle, and glycogen synthesis in liver. The protein is Insulin (INS) of Alligator mississippiensis (American alligator).